The chain runs to 101 residues: Small ribosomal subunit protein uS14 (101 aa).

It belongs to the universal ribosomal protein uS14 family. In terms of assembly, part of the 30S ribosomal subunit. Contacts proteins S3 and S10.

Its function is as follows. Binds 16S rRNA, required for the assembly of 30S particles and may also be responsible for determining the conformation of the 16S rRNA at the A site. In Orientia tsutsugamushi (strain Boryong) (Rickettsia tsutsugamushi), this protein is Small ribosomal subunit protein uS14.